The chain runs to 440 residues: tRNA-2-methylthio-N(6)-dimethylallyladenosine synthase (440 aa).

The MTTase N-terminal domain maps to 5 to 121 (KLLYLETFGC…LPELVRAAEK (117 aa)). [4Fe-4S] cluster is bound by residues C14, C50, C84, C159, C163, and C166. The region spanning 145-375 (RTDGVSRFVT…LDLQRRITLE (231 aa)) is the Radical SAM core domain. The TRAM domain occupies 378–440 (KSFVGTVQQV…QNSLQGELCR (63 aa)).

It belongs to the methylthiotransferase family. MiaB subfamily. Monomer. [4Fe-4S] cluster serves as cofactor.

It localises to the cytoplasm. The catalysed reaction is N(6)-dimethylallyladenosine(37) in tRNA + (sulfur carrier)-SH + AH2 + 2 S-adenosyl-L-methionine = 2-methylsulfanyl-N(6)-dimethylallyladenosine(37) in tRNA + (sulfur carrier)-H + 5'-deoxyadenosine + L-methionine + A + S-adenosyl-L-homocysteine + 2 H(+). Functionally, catalyzes the methylthiolation of N6-(dimethylallyl)adenosine (i(6)A), leading to the formation of 2-methylthio-N6-(dimethylallyl)adenosine (ms(2)i(6)A) at position 37 in tRNAs that read codons beginning with uridine. The protein is tRNA-2-methylthio-N(6)-dimethylallyladenosine synthase of Geotalea uraniireducens (strain Rf4) (Geobacter uraniireducens).